A 125-amino-acid polypeptide reads, in one-letter code: UPF0734 protein DDB_G0273871/DDB_G0273177 (125 aa).

Belongs to the UPF0734 family.

The sequence is that of UPF0734 protein DDB_G0273871/DDB_G0273177 from Dictyostelium discoideum (Social amoeba).